Consider the following 371-residue polypeptide: Queuine tRNA-ribosyltransferase (371 aa).

Residue Asp-90 is the Proton acceptor of the active site. Substrate-binding positions include 90–94 (DSGGF), Asp-144, Gln-189, and Gly-215. Residues 246 to 252 (GVGTPEN) form an RNA binding region. The active-site Nucleophile is Asp-265. The RNA binding; important for wobble base 34 recognition stretch occupies residues 270–274 (TRNAR). Zn(2+) is bound by residues Cys-303, Cys-305, Cys-308, and His-334.

The protein belongs to the queuine tRNA-ribosyltransferase family. As to quaternary structure, homodimer. Within each dimer, one monomer is responsible for RNA recognition and catalysis, while the other monomer binds to the replacement base PreQ1. Zn(2+) serves as cofactor.

The enzyme catalyses 7-aminomethyl-7-carbaguanine + guanosine(34) in tRNA = 7-aminomethyl-7-carbaguanosine(34) in tRNA + guanine. The protein operates within tRNA modification; tRNA-queuosine biosynthesis. Catalyzes the base-exchange of a guanine (G) residue with the queuine precursor 7-aminomethyl-7-deazaguanine (PreQ1) at position 34 (anticodon wobble position) in tRNAs with GU(N) anticodons (tRNA-Asp, -Asn, -His and -Tyr). Catalysis occurs through a double-displacement mechanism. The nucleophile active site attacks the C1' of nucleotide 34 to detach the guanine base from the RNA, forming a covalent enzyme-RNA intermediate. The proton acceptor active site deprotonates the incoming PreQ1, allowing a nucleophilic attack on the C1' of the ribose to form the product. After dissociation, two additional enzymatic reactions on the tRNA convert PreQ1 to queuine (Q), resulting in the hypermodified nucleoside queuosine (7-(((4,5-cis-dihydroxy-2-cyclopenten-1-yl)amino)methyl)-7-deazaguanosine). The protein is Queuine tRNA-ribosyltransferase of Helicobacter pylori (strain P12).